We begin with the raw amino-acid sequence, 164 residues long: Cyanate hydratase (164 aa).

Residues arginine 104, glutamate 107, and serine 130 contribute to the active site.

It belongs to the cyanase family.

The enzyme catalyses cyanate + hydrogencarbonate + 3 H(+) = NH4(+) + 2 CO2. Catalyzes the reaction of cyanate with bicarbonate to produce ammonia and carbon dioxide. In Botryotinia fuckeliana (strain B05.10) (Noble rot fungus), this protein is Cyanate hydratase.